The chain runs to 120 residues: Large ribosomal subunit protein uL18 (120 aa).

The protein belongs to the universal ribosomal protein uL18 family. In terms of assembly, part of the 50S ribosomal subunit; part of the 5S rRNA/L5/L18/L25 subcomplex. Contacts the 5S and 23S rRNAs.

This is one of the proteins that bind and probably mediate the attachment of the 5S RNA into the large ribosomal subunit, where it forms part of the central protuberance. This chain is Large ribosomal subunit protein uL18, found in Methylobacterium radiotolerans (strain ATCC 27329 / DSM 1819 / JCM 2831 / NBRC 15690 / NCIMB 10815 / 0-1).